An 85-amino-acid polypeptide reads, in one-letter code: Large ribosomal subunit protein bL27 (85 aa).

A disordered region spans residues 1–24; it reads MAHKKAGGSSRNGRDSHSKRLGVK.

The protein belongs to the bacterial ribosomal protein bL27 family.

The polypeptide is Large ribosomal subunit protein bL27 (Nitrosomonas eutropha (strain DSM 101675 / C91 / Nm57)).